We begin with the raw amino-acid sequence, 350 residues long: MTNLQTFELPTEVTGCAADISLGRALIQAWQKDGIFQIKTDSEQDRKTQEAMAASKQFCKEPLTFKSSCVSDLTYSGYVASGEEVTAGKPDFPEIFTVCKDLSVGDQRVKAGWPCHGPVPWPNNTYQKSMKTFMEELGLAGERLLKLTALGFELPINTFTDLTRDGWHHMRVLRFPPQTSTLSRGIGAHTDYGLLVIAAQDDVGGLYIRPPVEGEKRNRNWLPGESSAGMFEHDEPWTFVTPTPGVWTVFPGDILQFMTGGQLLSTPHKVKLNTRERFACAYFHEPNFEASAYPLFEPSANERIHYGEHFTNMFMRCYPDRITTQRINKENRLAHLEDLKKYSDTRATGS.

The Fe2OG dioxygenase domain occupies 166–286; it reads GWHHMRVLRF…RFACAYFHEP (121 aa). His-189 and His-268 together coordinate Fe cation.

Belongs to the iron/ascorbate-dependent oxidoreductase family. Monomer. It depends on Fe(2+) as a cofactor.

It carries out the reaction 2-oxoglutarate + O2 + 2 H(+) = ethene + 3 CO2 + H2O. The enzyme catalyses L-arginine + 2-oxoglutarate + O2 = guanidine + L-glutamate 5-semialdehyde + succinate + CO2. It functions in the pathway alkene biosynthesis; ethylene biosynthesis via 2-oxoglutarate. With respect to regulation, activated by catalase. Inhibited by chelating reagents such as EDTA and Tiron (4,5-dihydroxy-1,3-benzene disulphonic acid), and by DTNB (5,5'-dithio-bis-2-nitrobenzoate) and hydrogen peroxide. In terms of biological role, simultaneously catalyzes two reactions, namely formation of ethylene and of succinate from 2-oxoglutarate, with a molar ratio of 2:1. This is 2-oxoglutarate-dependent ethylene/succinate-forming enzyme (efe) from Pseudomonas savastanoi pv. phaseolicola (Pseudomonas syringae pv. phaseolicola).